The primary structure comprises 336 residues: MAAVQAPGEKINILAGETAKVGDPQKNEWPEQDRLPERSWRHKCASYVLALRPWSFSASLTPVALGSALAYRSQGVLDPRLLLGCAVAVLAVHGAGNLVNTYYDFSKGIDHKKSDDRTLVDRILEPQDVVRFGVFLYTLGCVCAACLYYLSALKLEHLALIYFGGLSGSFLYTGGIGFKYVALGDLVILITFGPLAVMFAYAVQVGSLAIFPLIYAIPLALSTEAILHSNNTRDMESDREAGIVTLAILIGPTFSYVLYNTLLFVPYLIFTILATHCSISLALPLLTIPMAFSLERQFRSQAFNKLPQRTAKLNLLLGLFYVFGIILAPAGSLPRL.

N-acetylalanine is present on Ala2. A run of 8 helical transmembrane segments spans residues 81–101 (LLLG…LVNT), 132–152 (FGVF…YLSA), 158–178 (LALI…GIGF), 186–206 (LVIL…VQVG), 207–227 (SLAI…EAIL), 243–265 (IVTL…LLFV), 275–295 (THCS…FSLE), and 313–333 (LNLL…AGSL).

The protein belongs to the UbiA prenyltransferase family. As to quaternary structure, interacts with HMGCR and SOAT1.

It localises to the endoplasmic reticulum membrane. It is found in the golgi apparatus membrane. Its subcellular location is the mitochondrion membrane. The catalysed reaction is menadiol + (2E,6E,10E)-geranylgeranyl diphosphate = menaquinol-4 + diphosphate. The enzyme catalyses all-trans-decaprenyl diphosphate + 4-hydroxybenzoate = 4-hydroxy-3-(all-trans-decaprenyl)benzoate + diphosphate. It participates in quinol/quinone metabolism; menaquinone biosynthesis. Its pathway is cofactor biosynthesis; ubiquinone biosynthesis. Prenyltransferase that mediates the formation of menaquinone-4 (MK-4) and coenzyme Q10. MK-4 is a vitamin K2 isoform required for endothelial cell development. Mediates the conversion of phylloquinone (PK) into MK-4, probably by cleaving the side chain of phylloquinone (PK) to release 2-methyl-1,4-naphthoquinone (menadione; K3) and then prenylating it with geranylgeranyl pyrophosphate (GGPP) to form MK-4. Also plays a role in cardiovascular development independently of MK-4 biosynthesis, by acting as a coenzyme Q10 biosynthetic enzyme: coenzyme Q10, also named ubiquinone, plays an important antioxidant role in the cardiovascular system. Mediates biosynthesis of coenzyme Q10 in the Golgi membrane, leading to protect cardiovascular tissues from NOS3/eNOS-dependent oxidative stress. This Mus musculus (Mouse) protein is UbiA prenyltransferase domain-containing protein 1 (Ubiad1).